Reading from the N-terminus, the 255-residue chain is Protein C activator (255 aa).

The first 18 residues, 1–18, serve as a signal peptide directing secretion; it reads MVLIRVLANLLILHLSYA. A propeptide spanning residues 19–24 is cleaved from the precursor; that stretch reads QKSSEL. The region spanning 25 to 246 is the Peptidase S1 domain; sequence VIGGDECNIN…YTDWIQSIIS (222 aa). Cystine bridges form between Cys31-Cys162, Cys49-Cys65, Cys97-Cys253, Cys141-Cys207, Cys173-Cys186, and Cys197-Cys222. An N-linked (GlcNAc...) asparagine glycan is attached at Asn45. The active-site Charge relay system is His64. Asn102 carries an N-linked (GlcNAc...) asparagine glycan. Asp109 serves as the catalytic Charge relay system. N-linked (GlcNAc...) asparagine glycosylation is present at Asn153. Ser201 acts as the Charge relay system in catalysis.

Belongs to the peptidase S1 family. Snake venom subfamily. In terms of assembly, monomer. As to expression, expressed by the venom gland.

The protein localises to the secreted. Snake venom serine protease that selectively cleaves the heavy chain of protein C (PROC). This activation is thrombomodulin-independent. The chain is Protein C activator from Agkistrodon piscivorus leucostoma (Western cottonmouth).